Here is a 1305-residue protein sequence, read N- to C-terminus: ABC transporter FPSE_09185 (1305 aa).

Asn28 is a glycosylation site (N-linked (GlcNAc...) asparagine). A run of 6 helical transmembrane segments spans residues 44-64, 99-119, 172-192, 199-219, 277-297, and 312-332; these read FCVY…MPLM, LYIV…KFCF, RLGT…VAFT, IVSA…VPIY, IIGA…GLAF, and VGVV…FSYL. Residues 48–348 enclose the ABC transmembrane type-1 1 domain; that stretch reads VVGALASIGV…ISQAMVAATE (301 aa). The 292-residue stretch at 372 to 663 folds into the ABC transporter 1 domain; that stretch reads LIFKDVTFEY…ENGVYYSLVE (292 aa). 407–414 contributes to the ATP binding site; that stretch reads GPSGSGKS. Residues 434-454 form a disordered region; the sequence is EAATPRSSKEGERDNHDERKY. Over residues 440-454 the composition is skewed to basic and acidic residues; that stretch reads SSKEGERDNHDERKY. N-linked (GlcNAc...) asparagine glycans are attached at residues Asn468, Asn507, and Asn525. The next 6 membrane-spanning stretches (helical) occupy residues 737 to 757, 780 to 800, 851 to 873, 877 to 899, 964 to 984, and 999 to 1019; these read FLLI…QAWL, GFMW…QCWI, GVFG…CLII, FGWK…SGFW, AVIF…ILWY, and FMVS…ILGV. One can recognise an ABC transmembrane type-1 2 domain in the interval 738–1025; it reads LLITIASMGV…ILGVAPSAAQ (288 aa). A disordered region spans residues 1038–1057; that stretch reads DSNRSSQEAEKSGPTVEDTD. N-linked (GlcNAc...) asparagine glycosylation is found at Asn1040, Asn1066, and Asn1075. The 239-residue stretch at 1062–1300 folds into the ABC transporter 2 domain; that stretch reads IELCNVSFKY…RGIYWDMCQT (239 aa). 1096 to 1103 lines the ATP pocket; that stretch reads GPSGCGKT. Asn1125 carries an N-linked (GlcNAc...) asparagine glycan.

It belongs to the ABC transporter superfamily. ABCB family. Multidrug resistance exporter (TC 3.A.1.201) subfamily.

Its subcellular location is the membrane. ABC transporter; part of the gene cluster that mediates the biosynthesis of the lipopeptides W493 A and B. W493 A and B consist of six amino acid residues D-allo-thr, L-Ala, D-Ala, L-Gln, D-Tyr, and L-Val/L-Ile linked to a 3-hydroxy-4-methyltetradecanoic acid polyketide chain. May be involved in excretion or internal transport of W493 A and B. In Fusarium pseudograminearum (strain CS3096) (Wheat and barley crown-rot fungus), this protein is ABC transporter FPSE_09185.